We begin with the raw amino-acid sequence, 75 residues long: Protein BRICK1 (75 aa).

Ala-2 carries the N-acetylalanine modification. Residues 41 to 72 (MSCRSRLATLNEKLTALERRIEYIEARVTKGE) adopt a coiled-coil conformation.

This sequence belongs to the BRK1 family. As to quaternary structure, homotrimer when in free form. Directly interacts with WASF2. Component of the WAVE1 complex composed of ABI2, CYFIP1 or CYFIP2, BRK1, NCKAP1 and WASF1/WAVE1. Within the complex, a heterodimer containing NCKAP1 and CYFIP1 interacts with a heterotrimer formed by WAVE1, ABI2 and BRK1.

It localises to the cytoplasm. The protein localises to the cytoskeleton. Functionally, involved in regulation of actin and microtubule organization. Part of a WAVE complex that activates the Arp2/3 complex. As component of the WAVE1 complex, required for BDNF-NTRK2 endocytic trafficking and signaling from early endosomes. This chain is Protein BRICK1 (BRK1), found in Homo sapiens (Human).